The sequence spans 396 residues: MKMLLLCVFSALALTNDALVRIPLKKFRSIRRQLTDSGKRAEELLADHHSLKYNLSFPASNAPTPETLKNYLDAQYYGEIGLGTPPQPFTVVFDTGSSNLWVPSIHCSLLDIACLLHHKYNSGKSSTYVKNGTAFAIQYGSGSLSGYLSQDTCTIGDLAIDSQLFGEAIKQPGVAFIAAKFDGILGMAYPRISVDGVAPVFDNIMSQKKVEQNVFSFYLNRNPDTEPGGELLLGGTDPKYYTGDFNYVNVTRQAYWQIRVDSMAVGDQLSLCTGGCEAIVDSGTSLITGPSVEVKALQKAIGAFPLIQGEYMVNCDTVPSLPVISFTVGGQVYTLTGEQYILKVTQAGKTMCLSGFMGLDIPAPAGPLWILGDVFMGQYYTVFDRDANRVGFAKAK.

Residues 1–18 form the signal peptide; it reads MKMLLLCVFSALALTNDA. Residues 19 to 61 constitute a propeptide, activation peptide; the sequence is LVRIPLKKFRSIRRQLTDSGKRAEELLADHHSLKYNLSFPASN. Residues 76-393 enclose the Peptidase A1 domain; the sequence is YYGEIGLGTP…DRDANRVGFA (318 aa). Residue Asp-94 is part of the active site. A disulfide bridge connects residues Cys-107 and Cys-114. Residues Asn-131 and Asn-249 are each glycosylated (N-linked (GlcNAc...) asparagine). Cys-272 and Cys-276 are oxidised to a cystine. Asp-281 is an active-site residue. The cysteines at positions 315 and 352 are disulfide-linked.

The protein belongs to the peptidase A1 family. In terms of assembly, monomer.

It localises to the lysosome. It catalyses the reaction Specificity similar to, but narrower than, that of pepsin A. Does not cleave the 4-Gln-|-His-5 bond in B chain of insulin.. Its activity is regulated as follows. Inhibited by pepstatin. Functionally, acid protease active in intracellular protein breakdown. The polypeptide is Cathepsin D (ctsd) (Chionodraco hamatus (Antarctic teleost icefish)).